The primary structure comprises 1068 residues: Protein AF-10 (1068 aa).

A PHD-type 1 zinc finger spans residues I22–Q74. The C2HC pre-PHD-type zinc finger occupies R79–V112. The self-association stretch occupies residues V80–A287. Residues A106–Y190 are required for interaction with histone H3. The segment at K135–F198 adopts a PHD-type 2 zinc-finger fold. Positions D141–K233 are interaction with FSTL3. The disordered stretch occupies residues R206–T260. Low complexity predominate over residues S211–H222. A Phosphoserine modification is found at S217. A compositionally biased stretch (basic and acidic residues) spans S223–K240. At S252 the chain carries Phosphoserine. Residue K280 forms a Glycyl lysine isopeptide (Lys-Gly) (interchain with G-Cter in SUMO2) linkage. The span at N291 to K305 shows a compositional bias: polar residues. The disordered stretch occupies residues N291 to A505. Over residues D306 to G317 the composition is skewed to basic and acidic residues. Positions R311–L674 are DNA-binding. The span at S352–Q372 shows a compositional bias: low complexity. Polar residues-rich tracts occupy residues Y387 to T396 and S404 to P446. S436 bears the Phosphoserine mark. Over residues E465–G483 the composition is skewed to basic residues. Residues V490 to A505 are compositionally biased toward low complexity. A Phosphoserine modification is found at S532. A compositionally biased stretch (low complexity) spans S583–S594. Disordered regions lie at residues S583–P612 and N660–N708. 2 stretches are compositionally biased toward polar residues: residues H595 to L604 and N660 to N673. Over residues L674–L694 the composition is skewed to low complexity. S684, S686, and S689 each carry phosphoserine. Positions N703–T784 are transactivation domain; required for DOT1L-binding. The leucine-zipper stretch occupies residues L750–L778. The segment covering A800–S814 has biased composition (polar residues). The disordered stretch occupies residues A800 to S865. Composition is skewed to low complexity over residues L834–S848 and Q855–S865.

In terms of assembly, self-associates. Interacts with FSTL3 isoform 2; the interaction enhances MLLT10 in vitro transcriptional activity and self-association. Interacts with YEATS4. Interacts with SS18. Interacts with DOT1L; this interaction also occurs with the KMT2A/MLL1 fusion protein. Interacts with histone H3; interaction is necessary for MLLT10 binding to nucleosomes; interaction is inhibited by histone H3 'Lys-27' methylations (H3K27me1, H3K27me2 and H3K27me3) amd acetylation; interaction stabilizes association of MLLT10 at chromatin; interaction is essential for histone H3 'Lys-79' dimethylation (H3K79me2). Expressed abundantly in testis.

Its subcellular location is the nucleus. Its function is as follows. Probably involved in transcriptional regulation. In vitro or as fusion protein with KMT2A/MLL1 has transactivation activity. Binds to cruciform DNA. In cells, binding to unmodified histone H3 regulates DOT1L functions including histone H3 'Lys-79' dimethylation (H3K79me2) and gene activation. This chain is Protein AF-10, found in Homo sapiens (Human).